Here is a 394-residue protein sequence, read N- to C-terminus: Trans-enoyl reductase fumoC (394 aa).

Residue 62–65 participates in NADP(+) binding; sequence VDGK. 152 to 159 is a binding site for substrate; sequence ASLASVGM. NADP(+) contacts are provided by residues 224–227, Tyr242, and 289–290; these read SSSS and LD. 309 to 313 contributes to the substrate binding site; it reads TLTQF. 378-379 is a binding site for NADP(+); it reads VK.

Belongs to the zinc-containing alcohol dehydrogenase family. As to quaternary structure, monomer.

The protein operates within secondary metabolite biosynthesis. Trans-enoyl reductase; part of the gene cluster that mediates the biosynthesis of fumosorinone, a 2-pyridone alkaloid that acts as an inhibitor of protein tyrosine phosphatase 1B which is implicated asa negative regulator of insulin receptor signaling and a potential drug target for the treatment of type II diabetes and other associated metabolic syndromes. The polyketide-amino acid backbone of fumosorinone is first assembled by the PKS-NRPS hybrid fumoS. The PKS modules condense one acetyl-CoA starter unit with 7 malonyl-CoA units, programmed C-methylations occurring after the first 3 and the sixth extensions, and cycles of full reduction occurring after the first 2 extensions. Because fumoS lacks a designated enoyl reductase (ER) domain, the required activity is provided the enoyl reductase fumoC. Upon formation of the polyketide backbone on the thiotemplate, the polyketide is transferred to the NRPS module and linked to tyrosine to produce the acyltetramic acid intermediate called prefumosorinone A. The cytochrome P450 monooxygenase fumoA then probably catalyzes an unprecedented oxidative ring expansion of prefumosorinone A to form prefumosorinone B which contains the 2-pyridone core of fumosorinone. The cytochrome P450 monooxygenase fumoB might hydroxylate the nitrogen of prefumosorinone B, but not the acyltetramic acid prefumosorinone A, to form fumosorinone. In Cordyceps fumosorosea (strain ARSEF 2679) (Isaria fumosorosea), this protein is Trans-enoyl reductase fumoC.